We begin with the raw amino-acid sequence, 422 residues long: UPF0761 membrane protein Paes_1471 (422 aa).

The next 6 helical transmembrane spans lie at 47–67 (LLSI…SPVF), 103–123 (SVPT…ISTI), 143–163 (FTLY…SLVA), 185–205 (LLLL…ILVP), 208–228 (KVKF…FEFS), and 247–267 (GALS…VVAL).

It belongs to the UPF0761 family.

Its subcellular location is the cell inner membrane. This chain is UPF0761 membrane protein Paes_1471, found in Prosthecochloris aestuarii (strain DSM 271 / SK 413).